A 119-amino-acid chain; its full sequence is Large ribosomal subunit protein bL19c (119 aa).

Belongs to the bacterial ribosomal protein bL19 family.

Its subcellular location is the plastid. The protein localises to the chloroplast. The chain is Large ribosomal subunit protein bL19c from Mesostigma viride (Green alga).